Reading from the N-terminus, the 79-residue chain is Large ribosomal subunit protein bL28 (79 aa).

It belongs to the bacterial ribosomal protein bL28 family.

This is Large ribosomal subunit protein bL28 from Blochmanniella floridana.